The chain runs to 179 residues: Large ribosomal subunit protein uL5 (179 aa).

The protein belongs to the universal ribosomal protein uL5 family. As to quaternary structure, part of the 50S ribosomal subunit; part of the 5S rRNA/L5/L18/L25 subcomplex. Contacts the 5S rRNA and the P site tRNA. Forms a bridge to the 30S subunit in the 70S ribosome.

In terms of biological role, this is one of the proteins that bind and probably mediate the attachment of the 5S RNA into the large ribosomal subunit, where it forms part of the central protuberance. In the 70S ribosome it contacts protein S13 of the 30S subunit (bridge B1b), connecting the 2 subunits; this bridge is implicated in subunit movement. Contacts the P site tRNA; the 5S rRNA and some of its associated proteins might help stabilize positioning of ribosome-bound tRNAs. The sequence is that of Large ribosomal subunit protein uL5 from Pasteurella multocida (strain Pm70).